The chain runs to 480 residues: Coronin-2B (480 aa).

WD repeat units lie at residues 85 to 125 (GHQG…LKRN), 135 to 177 (GHSR…KMID), 179 to 217 (HRDVILCMSFNTDGSLLATTCKDKKLRVLEPRSGRVLQE), 220 to 263 (CKTH…MPVT), and 265 to 308 (EEID…PYLT). The stretch at 436–475 (NELLRMFFRQQEEIRRLKEQLSQRDLLVRQLELELKNLRN) forms a coiled coil.

This sequence belongs to the WD repeat coronin family.

The protein resides in the cytoplasm. It localises to the cytoskeleton. Functionally, may play a role in the reorganization of neuronal actin structure. The polypeptide is Coronin-2B (coro2b) (Xenopus tropicalis (Western clawed frog)).